Here is a 676-residue protein sequence, read N- to C-terminus: Methionine--tRNA ligase (676 aa).

The short motif at 15-25 (PYANGPIHLGH) is the 'HIGH' region element. Residues Cys-146, Cys-149, Cys-159, and Cys-162 each contribute to the Zn(2+) site. Positions 332–336 (KMSKS) match the 'KMSKS' region motif. An ATP-binding site is contributed by Lys-335. The region spanning 575–676 (DFAKIDLRIA…EGAQPGMRVK (102 aa)) is the tRNA-binding domain.

Belongs to the class-I aminoacyl-tRNA synthetase family. MetG type 1 subfamily. In terms of assembly, homodimer. The cofactor is Zn(2+).

The protein resides in the cytoplasm. The catalysed reaction is tRNA(Met) + L-methionine + ATP = L-methionyl-tRNA(Met) + AMP + diphosphate. In terms of biological role, is required not only for elongation of protein synthesis but also for the initiation of all mRNA translation through initiator tRNA(fMet) aminoacylation. The chain is Methionine--tRNA ligase from Shewanella sp. (strain MR-4).